A 439-amino-acid polypeptide reads, in one-letter code: Ribosomal protein uS12 methylthiotransferase RimO (439 aa).

Residues 5-115 form the MTTase N-terminal domain; that stretch reads PRISFTSLGC…VLDAVHRALP (111 aa). 6 residues coordinate [4Fe-4S] cluster: C14, C50, C79, C146, C150, and C153. In terms of domain architecture, Radical SAM core spans 132–369; it reads LTPRHYAYLK…MARQQKISAR (238 aa). In terms of domain architecture, TRAM spans 372 to 438; it reads KRKVGTRQQI…QYDLHGSVAG (67 aa).

The protein belongs to the methylthiotransferase family. RimO subfamily. [4Fe-4S] cluster serves as cofactor.

The protein resides in the cytoplasm. The catalysed reaction is L-aspartate(89)-[ribosomal protein uS12]-hydrogen + (sulfur carrier)-SH + AH2 + 2 S-adenosyl-L-methionine = 3-methylsulfanyl-L-aspartate(89)-[ribosomal protein uS12]-hydrogen + (sulfur carrier)-H + 5'-deoxyadenosine + L-methionine + A + S-adenosyl-L-homocysteine + 2 H(+). Catalyzes the methylthiolation of an aspartic acid residue of ribosomal protein uS12. The polypeptide is Ribosomal protein uS12 methylthiotransferase RimO (Bradyrhizobium diazoefficiens (strain JCM 10833 / BCRC 13528 / IAM 13628 / NBRC 14792 / USDA 110)).